The primary structure comprises 257 residues: Adenosylcobinamide-GDP ribazoletransferase (257 aa).

The next 7 membrane-spanning stretches (helical) occupy residues 30 to 50 (IVYF…IGWI), 52 to 72 (MLLF…VLIT), 109 to 129 (SLLA…DIIS), 132 to 152 (SLWV…LLTY), 175 to 195 (LITA…FIFL), 198 to 218 (NIVL…IILF), and 237 to 257 (GIEL…FMFF).

It belongs to the CobS family. Mg(2+) serves as cofactor.

Its subcellular location is the cell membrane. It carries out the reaction alpha-ribazole + adenosylcob(III)inamide-GDP = adenosylcob(III)alamin + GMP + H(+). The catalysed reaction is alpha-ribazole 5'-phosphate + adenosylcob(III)inamide-GDP = adenosylcob(III)alamin 5'-phosphate + GMP + H(+). It participates in cofactor biosynthesis; adenosylcobalamin biosynthesis; adenosylcobalamin from cob(II)yrinate a,c-diamide: step 7/7. Functionally, joins adenosylcobinamide-GDP and alpha-ribazole to generate adenosylcobalamin (Ado-cobalamin). Also synthesizes adenosylcobalamin 5'-phosphate from adenosylcobinamide-GDP and alpha-ribazole 5'-phosphate. The sequence is that of Adenosylcobinamide-GDP ribazoletransferase from Clostridioides difficile (strain 630) (Peptoclostridium difficile).